Consider the following 157-residue polypeptide: Endoribonuclease YbeY (157 aa).

Residues histidine 116, histidine 120, and histidine 126 each coordinate Zn(2+).

It belongs to the endoribonuclease YbeY family. Requires Zn(2+) as cofactor.

It localises to the cytoplasm. Single strand-specific metallo-endoribonuclease involved in late-stage 70S ribosome quality control and in maturation of the 3' terminus of the 16S rRNA. This is Endoribonuclease YbeY from Blochmanniella pennsylvanica (strain BPEN).